The following is a 355-amino-acid chain: UDP-3-O-acylglucosamine N-acyltransferase (355 aa).

Histidine 252 (proton acceptor) is an active-site residue.

Belongs to the transferase hexapeptide repeat family. LpxD subfamily. Homotrimer.

It carries out the reaction a UDP-3-O-[(3R)-3-hydroxyacyl]-alpha-D-glucosamine + a (3R)-hydroxyacyl-[ACP] = a UDP-2-N,3-O-bis[(3R)-3-hydroxyacyl]-alpha-D-glucosamine + holo-[ACP] + H(+). It participates in bacterial outer membrane biogenesis; LPS lipid A biosynthesis. In terms of biological role, catalyzes the N-acylation of UDP-3-O-acylglucosamine using 3-hydroxyacyl-ACP as the acyl donor. Is involved in the biosynthesis of lipid A, a phosphorylated glycolipid that anchors the lipopolysaccharide to the outer membrane of the cell. This chain is UDP-3-O-acylglucosamine N-acyltransferase, found in Polynucleobacter necessarius subsp. necessarius (strain STIR1).